We begin with the raw amino-acid sequence, 470 residues long: MHFSIPETESRSGDSGGSAYVAYNIHVNGVLHCRVRYSQLLGLHEQLRKEYGANVLPAFPPKKLFSLTPAEVEQRREQLEKYMQAVRQDPLLGSSETFNSFLRRAQQETQQVPTEEVSLEVLLSNGQKVLVNVLTSDQTEDVLEAVAAKLDLPDDLIGYFSLFLVREKEDGAFSFVRKLQEFELPYVSVTSLRSQEYKIVLRKSYWDSAYDDDVMENRVGLNLLYAQTVSDIERGWILVTKEQHRQLKSLQEKVSKKEFLRLAQTLRHYGYLRFDACVADFPEKDCPVVVSAGNSELSLQLRLPGQQLREGSFRVTRMRCWRVTSSVPLPSGSTSSPGRGRGEVRLELAFEYLMSKDRLQWVTITSPQAIMMSICLQSMVDELMVKKSGGSIRKMLRRRVGGTLRRSDSQQAVKSPPLLESPDATRESMVKLSSKLSAVSLRGIGSPSTDASASDVHGNFAFEGIGDEDL.

A PX domain is found at 1-109 (MHFSIPETES…SFLRRAQQET (109 aa)). A 1,2-diacyl-sn-glycero-3-phospho-(1D-myo-inositol-3-phosphate) is bound by residues Arg36, Ser38, Lys62, and Arg75. The region spanning 115–206 (EEVSLEVLLS…YKIVLRKSYW (92 aa)) is the Ras-associating domain. The segment at 115 to 432 (EEVSLEVLLS…DATRESMVKL (318 aa)) is FERM-like. The PTB-like F3 module stretch occupies residues 270 to 432 (GYLRFDACVA…DATRESMVKL (163 aa)). Phosphoserine is present on residues Ser336, Ser407, Ser409, Ser415, Ser421, Ser437, and Ser440. Positions 401–426 (GGTLRRSDSQQAVKSPPLLESPDATR) are disordered. The interval 458-470 (GNFAFEGIGDEDL) is interacts with the retriever complex.

Belongs to the sorting nexin family. As to quaternary structure, monomer. Interacts with APP (via cytoplasmic YXNPXY motif). Interacts with KIF1B. Interacts with the C-termini of P-selectin, PTC, LDLR, VLDLR, LRP1 and LRP8. Interacts with KRIT1 (via N-terminus). Interacts with HRAS. Interacts with ITGB1 and ITGB5 (via NPxY motif). Interacts with CCDC22 and CCDC93; the interaction associates SNX17 with the CCC complex. Interacts (via C-terminus) with VPS26C and VPS35L; the interactions are direct and associate SNX17 with the retriever complex.

It localises to the cytoplasm. The protein localises to the early endosome. The protein resides in the cytoplasmic vesicle membrane. Functionally, critical regulator of endosomal recycling of numerous surface proteins, including integrins, signaling receptor and channels. Binds to NPxY sequences in the cytoplasmic tails of target cargos. Associates with retriever and CCC complexes to prevent lysosomal degradation and promote cell surface recycling of numerous cargos such as integrins ITGB1, ITGB5 and their associated alpha subunits. Also required for maintenance of normal cell surface levels of APP and LRP1. Interacts with membranes containing phosphatidylinositol 3-phosphate (PtdIns(3P)). The polypeptide is Sorting nexin-17 (SNX17) (Homo sapiens (Human)).